A 267-amino-acid chain; its full sequence is X-box-binding protein 1 (267 aa).

Topologically, residues 1–180 are cytoplasmic; that stretch reads MVVVAAAPSA…VQAQLSPPQN (180 aa). The interval 35–60 is disordered; sequence VPGPRAAGSEASGTPQARKRQRLTHL. A Phosphoserine modification is found at serine 61. The bZIP domain occupies 63-126; sequence EEKALRRKLK…HGLVIENQEL (64 aa). The segment at 65 to 87 is basic motif; that stretch reads KALRRKLKNRVAAQTARDRKKAR. The nuclear localization signal (NLS) stretch occupies residues 69-85; sequence RKLKNRVAAQTARDRKK. The leucine-zipper stretch occupies residues 91-126; sequence LEQQVVDLEEENQKLQLENQLLREKTHGLVIENQEL. The chain crosses the membrane as a helical; Signal-anchor for type II membrane protein span at residues 181 to 198; sequence IFPWILTLLPLQILSLIS. Over 199 to 267 the chain is Lumenal; the sequence is FWAFWTSWTL…FVLTMYTPSL (69 aa).

It belongs to the bZIP family. In terms of assembly, isoform 1 interacts with HM13. Isoform 1 interacts with RNF139; the interaction induces ubiquitination and degradation of isoform 1. Isoform 1 interacts (via luminal domain) with DERL1; the interaction obviates the need for ectodomain shedding prior HM13/SPP-mediated XBP1 isoform 1 cleavage. Isoform 1 interacts with HDAC3 and AKT1; the interactions occur in endothelial cell (EC) under disturbed flow. Isoform 1 interacts with the oncoprotein FOS. Interacts with SIRT1. Post-translationally, isoform 1 is ubiquitinated, leading to proteasome-mediated degradation in response to ER stress. X-box-binding protein 1, cytoplasmic form and luminal form are produced by intramembrane proteolytic cleavage of ER membrane-anchored isoform 1 triggered by HM13/SPP in a DERL1-RNF139-dependent and VCP/p97-independent manner. X-box-binding protein 1, luminal form is ubiquitinated leading to proteasomal degradation. In terms of processing, acetylated by EP300; acetylation positively regulates the transcriptional activity of XBP1. Deacetylated by SIRT1; deacetylation negatively regulates the transcriptional activity of XBP1.

It localises to the nucleus. Its subcellular location is the endoplasmic reticulum. The protein resides in the cytoplasm. It is found in the endoplasmic reticulum membrane. The protein localises to the membrane. In terms of biological role, functions as a transcription factor during endoplasmic reticulum (ER) stress by regulating the unfolded protein response (UPR). Required for cardiac myogenesis and hepatogenesis during embryonic development, and the development of secretory tissues such as exocrine pancreas and salivary gland. Involved in terminal differentiation of B lymphocytes to plasma cells and production of immunoglobulins. Modulates the cellular response to ER stress in a PIK3R-dependent manner. Binds to the cis-acting X box present in the promoter regions of major histocompatibility complex class II genes. Involved in VEGF-induced endothelial cell (EC) proliferation and retinal blood vessel formation during embryonic development but also for angiogenesis in adult tissues under ischemic conditions. Functions also as a major regulator of the UPR in obesity-induced insulin resistance and type 2 diabetes for the management of obesity and diabetes prevention. Its function is as follows. Acts as a weak transcriptional factor. Together with HDAC3, contributes to the activation of NFE2L2-mediated HMOX1 transcription factor gene expression in a PI(3)K/mTORC2/Akt-dependent signaling pathway leading to EC survival under disturbed flow/oxidative stress. Binds to the ER stress response element (ERSE) upon ER stress. Binds to the consensus 5'-GATGACGTG[TG]N(3)[AT]T-3' sequence related to cAMP responsive element (CRE)-like sequences. Associates preferentially to the HDAC3 gene promoter region in a static flow-dependent manner. Binds to the CDH5/VE-cadherin gene promoter region. This Rattus norvegicus (Rat) protein is X-box-binding protein 1.